The following is a 254-amino-acid chain: Nickel import ATP-binding protein NikD (254 aa).

Residues 2 to 241 enclose the ABC transporter domain; that stretch reads PQQIELRDIA…PKHAVTRSLV (240 aa). 36–43 is a binding site for ATP; that stretch reads GGSGSGKS.

This sequence belongs to the ABC transporter superfamily. Nickel importer (TC 3.A.1.5.3) family. In terms of assembly, the complex is composed of two ATP-binding proteins (NikD and NikE), two transmembrane proteins (NikB and NikC) and a solute-binding protein (NikA).

It is found in the cell inner membrane. It catalyses the reaction Ni(2+)(out) + ATP + H2O = Ni(2+)(in) + ADP + phosphate + H(+). In terms of biological role, part of the ABC transporter complex NikABCDE involved in nickel import. Responsible for energy coupling to the transport system. The chain is Nickel import ATP-binding protein NikD from Shigella dysenteriae serotype 1 (strain Sd197).